Consider the following 296-residue polypeptide: METVYCTFDHKLSLSDISTLCKLMNIVIPIPAHHHLIGSGNLGLYPIVSSNKDYVHVRNVLRTMVVTILQKVEGNQLVLRKPVTGHQYAIKNTGPFPWEKGDTLTLIPPLSTHSEEKLLKLGDWELTVPLVVPTAIAAEINIRLLCIGLIAVHREYNEMQTIIDELCSIQYRDVLIKLPDIVNDKQSMYSMKTACISLSMITAMAPDIVRTYIDRLTLEDHSMLLIKCQELLSKRTTLNTQRCGQLHATEIKDELKKVKSVLTMIDQINSLTNEKTYFVVCDVSADNRMATCIYKN.

The protein belongs to the herpesviridae TRX2 protein family. As to quaternary structure, interacts with TRX1 and major capisd protein/MCP.

Its subcellular location is the virion. The protein resides in the host nucleus. In terms of biological role, structural component of the T=16 icosahedral capsid. The capsid is composed of pentamers and hexamers of major capsid protein/MCP, which are linked together by heterotrimers called triplexes. These triplexes are formed by a single molecule of triplex protein 1/TRX1 and two copies of triplex protein 2/TRX2. Additionally, TRX1 is required for efficient transport of TRX2 to the nucleus, which is the site of capsid assembly. This Human herpesvirus 6A (strain Uganda-1102) (HHV-6 variant A) protein is Triplex capsid protein 2.